Reading from the N-terminus, the 226-residue chain is Urease accessory protein UreF (226 aa).

The protein belongs to the UreF family. As to quaternary structure, ureD, UreF and UreG form a complex that acts as a GTP-hydrolysis-dependent molecular chaperone, activating the urease apoprotein by helping to assemble the nickel containing metallocenter of UreC. The UreE protein probably delivers the nickel.

The protein localises to the cytoplasm. Its function is as follows. Required for maturation of urease via the functional incorporation of the urease nickel metallocenter. The chain is Urease accessory protein UreF from Burkholderia mallei (strain NCTC 10247).